A 455-amino-acid polypeptide reads, in one-letter code: MNNQFTWLHIGLGSFHRAHQAWYLHRLIASGDNRWRIAAGNIRNDAEQVVQALAAQGGRYVLETVSPEGEREYEEITSIQKLLPWQAGLQPLINEGANPQTKVIAFTVTEGGYYLNTRHRLETSNPDLQADLQGECKTIYGTLARILEKRMADNAGPLTLLNCDNVRHNGERFHDGMVEFLQLTGKQAVIDWMAANTTCPNTMVDRITPRPAADLPARIKAQAGIDDKAPVMGETFIQWVVENNFRDVRPNLEAVGVEMVESVIPYEEAKIRILNASHSCIAWAGTLIGQQYIHESTLTDVIYAIADRYVTEDVIPCLGDNGIDLPTYRDVVLKRFTNPYIQDTNQRVAADGFSKIPAMIAPTLQECYQRGVRPEATAMLPALFFVFMEQWHKGTLPYQYQDGILDAQAVHEMFEAQDPVAVFARDKALFGDLANNADFLALMREKVAAVYTLIN.

The protein belongs to the mannitol dehydrogenase family. In terms of assembly, monomer.

It carries out the reaction D-arabinitol + NAD(+) = D-xylulose + NADH + H(+). It participates in carbohydrate metabolism; D-arabinitol metabolism. This chain is D-arabinitol 4-dehydrogenase (dalD), found in Klebsiella pneumoniae.